Reading from the N-terminus, the 389-residue chain is Chalcone synthase E (389 aa).

The active site involves C164.

This sequence belongs to the thiolase-like superfamily. Chalcone/stilbene synthases family.

The catalysed reaction is (E)-4-coumaroyl-CoA + 3 malonyl-CoA + 3 H(+) = 2',4,4',6'-tetrahydroxychalcone + 3 CO2 + 4 CoA. It functions in the pathway secondary metabolite biosynthesis; flavonoid biosynthesis. Functionally, the primary product of this enzyme is 4,2',4',6'-tetrahydroxychalcone (also termed naringenin-chalcone or chalcone) which can under specific conditions spontaneously isomerize into naringenin. The protein is Chalcone synthase E (CHSE) of Ipomoea nil (Japanese morning glory).